The primary structure comprises 122 residues: Acidic phospholipase A2 homolog vipoxin A chain (122 aa).

Cystine bridges form between Cys26–Cys115, Cys28–Cys44, Cys43–Cys95, Cys49–Cys122, Cys50–Cys88, Cys57–Cys81, and Cys75–Cys86.

The protein belongs to the phospholipase A2 family. Group II subfamily. D49 sub-subfamily. As to quaternary structure, heterodimer of A and B (AC P14420) chains; non-covalently linked. The A chain (acidic) is non-toxic, and increases the toxicity of the B chain (basic). The A chain may act as factor stabilizing the complex structure and hence retaining its toxicity by preventing non-specific binding. Upon binding to the target membranes the A chain may dissociate. As to expression, expressed by the venom gland.

It localises to the secreted. Heterodimer: postsynaptic neurotoxin. Its function is as follows. Monomer: Acidic phospholipase A2 homolog that is non-toxic. In Vipera ammodytes meridionalis (Eastern sand viper), this protein is Acidic phospholipase A2 homolog vipoxin A chain.